Consider the following 501-residue polypeptide: ATP synthase subunit beta (501 aa).

ATP is bound at residue Gly-153 to Thr-160.

Belongs to the ATPase alpha/beta chains family. F-type ATPases have 2 components, CF(1) - the catalytic core - and CF(0) - the membrane proton channel. CF(1) has five subunits: alpha(3), beta(3), gamma(1), delta(1), epsilon(1). CF(0) has three main subunits: a(1), b(2) and c(9-12). The alpha and beta chains form an alternating ring which encloses part of the gamma chain. CF(1) is attached to CF(0) by a central stalk formed by the gamma and epsilon chains, while a peripheral stalk is formed by the delta and b chains.

The protein localises to the cell inner membrane. The enzyme catalyses ATP + H2O + 4 H(+)(in) = ADP + phosphate + 5 H(+)(out). Its function is as follows. Produces ATP from ADP in the presence of a proton gradient across the membrane. The catalytic sites are hosted primarily by the beta subunits. The polypeptide is ATP synthase subunit beta (Cytophaga hutchinsonii (strain ATCC 33406 / DSM 1761 / CIP 103989 / NBRC 15051 / NCIMB 9469 / D465)).